Here is a 318-residue protein sequence, read N- to C-terminus: DNA repair nuclease/redox regulator APEX1 (318 aa).

The tract at residues 1 to 33 is necessary for interaction with YBX1, binding to RNA, association together with NPM1 to rRNA, endoribonuclease activity on abasic RNA and localization in the nucleoli; sequence MPKRGKKGAVAEDGDELRTEPEAKKSKTAAKKN. Residues 1–60 form a disordered region; it reads MPKRGKKGAVAEDGDELRTEPEAKKSKTAAKKNDKEAAGEGPALYEDPPDQKTSPSGKPA. N6-acetyllysine; by EP300 is present on residues Lys6 and Lys7. The Nuclear localization signal (NLS) signature appears at 8–13; sequence GAVAED. Basic and acidic residues predominate over residues 16–38; the sequence is ELRTEPEAKKSKTAAKKNDKEAA. Residues 23-33 form a necessary for interaction with NPM1 and for efficient rRNA binding region; it reads AKKSKTAAKKN. 4 positions are modified to N6-acetyllysine: Lys27, Lys31, Lys32, and Lys35. Phosphoserine is present on Ser54. The Nuclear export signal (NES) motif lies at 64-80; that stretch reads ICSWNVDGLRAWIKKKG. S-nitrosocysteine; alternate is present on Cys65. Cysteines 65 and 93 form a disulfide. Residue Asp70 coordinates Mg(2+). The residue at position 93 (Cys93) is an S-nitrosocysteine; alternate. Glu96 lines the Mg(2+) pocket. Tyr171 is an active-site residue. Position 197 is an N6-acetyllysine (Lys197). 2 residues coordinate Mg(2+): Asp210 and Asn212. The active-site Proton donor/acceptor is Asp210. Phosphothreonine; by CDK5 is present on Thr233. The mitochondrial targeting sequence (MTS) stretch occupies residues 289 to 318; sequence HSLLPALCDSKIRSKALGSDHCPITLYLAL. Asp308 is a binding site for Mg(2+). Cys310 bears the S-nitrosocysteine mark.

This sequence belongs to the DNA repair enzymes AP/ExoA family. In terms of assembly, monomer. Homodimer; disulfide-linked. Component of the SET complex, composed of at least APEX1, SET, ANP32A, HMGB2, NME1 and TREX1. Associates with the dimer XRCC5/XRCC6 in a DNA-dependent manner. Interacts with SIRT1; the interaction is increased in the context of genotoxic stress. Interacts with HDAC1, HDAC2 and HDAC3; the interactions are not dependent on the APEX1 acetylation status. Interacts with XRCC1; the interaction is induced by SIRT1 and increased with the APEX1 acetylated form. Interacts with NPM1 (via N-terminal domain); the interaction is RNA-dependent and decreases in hydrogen peroxide-damaged cells. Interacts (via N-terminus) with YBX1 (via C-terminus); the interaction is increased in presence of APEX1 acetylated at Lys-6 and Lys-7. Interacts with HNRNPL; the interaction is DNA-dependent. Interacts (via N-terminus) with KPNA1 and KPNA2. Interacts with TXN; the interaction stimulates the FOS/JUN AP-1 complex DNA-binding activity in a redox-dependent manner. Interacts with GZMA, KRT8, MDM2, POLB, PRDX6, PRPF19, RPLP0, TOMM20 and WDR77. Binds to CDK5. It depends on Mg(2+) as a cofactor. The cofactor is Mn(2+). Post-translationally, phosphorylated. Phosphorylation by kinase PKC or casein kinase CK2 results in enhanced redox activity that stimulates binding of the FOS/JUN AP-1 complex to its cognate binding site. AP-endodeoxyribonuclease activity is not affected by CK2-mediated phosphorylation. Phosphorylation of Thr-233 by CDK5 in response to MPP(+)/MPTP (1-methyl-4-phenylpyridinium) reduces AP-endodeoxyribonuclease activity resulting in accumulation of DNA damage and contributing to neuronal death. In terms of processing, acetylated on Lys-6 and Lys-7. Acetylation is increased by the transcriptional coactivator EP300 acetyltransferase, genotoxic agents like H(2)O(2) and methyl methanesulfonate (MMS). Acetylation increases its binding affinity to the negative calcium response element (nCaRE) DNA promoter. The acetylated form induces a stronger binding of YBX1 to the Y-box sequence in the MDR1 promoter than the unacetylated form. Deacetylated on lysines. Lys-6 and Lys-7 are deacetylated by SIRT1. Cleaved at Lys-31 by granzyme A to create the mitochondrial form; leading in reduction of binding to DNA, AP endodeoxyribonuclease activity, redox activation of transcription factors and to enhanced cell death. Cleaved by granzyme K; leading to intracellular ROS accumulation and enhanced cell death after oxidative stress. Post-translationally, cys-69 and Cys-93 are nitrosylated in response to nitric oxide (NO) and lead to the exposure of the nuclear export signal (NES). In terms of processing, ubiquitinated by MDM2; leading to translocation to the cytoplasm and proteasomal degradation.

The protein resides in the nucleus. The protein localises to the nucleolus. It localises to the nucleus speckle. Its subcellular location is the endoplasmic reticulum. It is found in the cytoplasm. The protein resides in the mitochondrion. It carries out the reaction a deoxyribonucleotide-2'-deoxyribose-5'-monophosphate-DNA + H2O = a 5'-end 2'-deoxyribose-5'-monophosphate-DNA + a 3'-end 2'-deoxyribonucleotide-DNA + H(+). It catalyses the reaction Exonucleolytic cleavage in the 3'- to 5'-direction to yield nucleoside 5'-phosphates.. The enzyme catalyses a 3'-end 2'-deoxyribonucleotide-3'-phosphoglycolate-DNA + H2O = 2-phosphoglycolate + a 3'-end 2'-deoxyribonucleotide-DNA + H(+). The catalysed reaction is a 3'-end 2'-deoxyribonucleotide-8-oxoguanine-DNA + H2O = 8-oxo-dGMP + a 3'-end 2'-deoxyribonucleotide-DNA + H(+). NPM1 stimulates endodeoxyribonuclease activity on double-stranded DNA with AP sites, but inhibits endoribonuclease activity on single-stranded RNA containing AP sites. In terms of biological role, multifunctional protein that plays a central role in the cellular response to oxidative stress. The two major activities of APEX1 are DNA repair and redox regulation of transcriptional factors. Functions as an apurinic/apyrimidinic (AP) endodeoxyribonuclease in the base excision repair (BER) pathway of DNA lesions induced by oxidative and alkylating agents. Initiates repair of AP sites in DNA by catalyzing hydrolytic incision of the phosphodiester backbone immediately adjacent to the damage, generating a single-strand break with 5'-deoxyribose phosphate and 3'-hydroxyl ends. Also incises at AP sites in the DNA strand of DNA/RNA hybrids, single-stranded DNA regions of R-loop structures, and single-stranded RNA molecules. Operates at switch sites of immunoglobulin (Ig) constant regions where it mediates Ig isotype class switch recombination. Processes AP sites induced by successive action of AICDA and UNG. Generates staggered nicks in opposite DNA strands resulting in the formation of double-strand DNA breaks that are finally resolved via non-homologous end joining repair pathway. Has 3'-5' exodeoxyribonuclease activity on mismatched deoxyribonucleotides at the 3' termini of nicked or gapped DNA molecules during short-patch BER. Possesses DNA 3' phosphodiesterase activity capable of removing lesions (such as phosphoglycolate and 8-oxoguanine) blocking the 3' side of DNA strand breaks. Also acts as an endoribonuclease involved in the control of single-stranded RNA metabolism. Plays a role in regulating MYC mRNA turnover by preferentially cleaving in between UA and CA dinucleotides of the MYC coding region determinant (CRD). In association with NMD1, plays a role in the rRNA quality control process during cell cycle progression. Acts as a loading factor for POLB onto non-incised AP sites in DNA and stimulates the 5'-terminal deoxyribose 5'-phosphate (dRp) excision activity of POLB. Exerts reversible nuclear redox activity to regulate DNA binding affinity and transcriptional activity of transcriptional factors by controlling the redox status of their DNA-binding domain, such as the FOS/JUN AP-1 complex after exposure to IR. Involved in calcium-dependent down-regulation of parathyroid hormone (PTH) expression by binding to negative calcium response elements (nCaREs). Together with HNRNPL or the dimer XRCC5/XRCC6, associates with nCaRE, acting as an activator of transcriptional repression. May also play a role in the epigenetic regulation of gene expression by participating in DNA demethylation. Stimulates the YBX1-mediated MDR1 promoter activity, when acetylated at Lys-6 and Lys-7, leading to drug resistance. Plays a role in protection from granzyme-mediated cellular repair leading to cell death. Binds DNA and RNA. Associates, together with YBX1, on the MDR1 promoter. Together with NPM1, associates with rRNA. This Pan paniscus (Pygmy chimpanzee) protein is DNA repair nuclease/redox regulator APEX1 (APEX1).